A 187-amino-acid chain; its full sequence is Elongation factor P (187 aa).

This sequence belongs to the elongation factor P family.

The protein localises to the cytoplasm. It participates in protein biosynthesis; polypeptide chain elongation. Involved in peptide bond synthesis. Stimulates efficient translation and peptide-bond synthesis on native or reconstituted 70S ribosomes in vitro. Probably functions indirectly by altering the affinity of the ribosome for aminoacyl-tRNA, thus increasing their reactivity as acceptors for peptidyl transferase. This is Elongation factor P from Ruegeria pomeroyi (strain ATCC 700808 / DSM 15171 / DSS-3) (Silicibacter pomeroyi).